The following is a 365-amino-acid chain: Pre-small/secreted glycoprotein (365 aa).

An N-terminal signal peptide occupies residues 1 to 32; sequence MGASGILQLPRERFRKTSFFVWVIILFHKVFS. Residue Asn40 is glycosylated (N-linked (GlcNAc...) asparagine; by host). 2 disulfides stabilise this stretch: Cys108–Cys135 and Cys121–Cys147. N-linked (GlcNAc...) asparagine; by host glycosylation is found at Asn204, Asn228, Asn257, and Asn268.

The protein belongs to the filoviruses glycoprotein family. Homodimer; disulfide-linked. The homodimers are linked by two disulfide bonds in a parallel orientation. In terms of assembly, monomer. Post-translationally, this precursor is processed into mature sGP and delta-peptide by host furin or furin-like proteases. The cleavage site corresponds to the furin optimal cleavage sequence [KR]-X-[KR]-R. N-glycosylated. In terms of processing, O-glycosylated.

The protein resides in the secreted. Its function is as follows. Seems to possess an anti-inflammatory activity as it can reverse the barrier-decreasing effects of TNF alpha. Might therefore contribute to the lack of inflammatory reaction seen during infection in spite the of extensive necrosis and massive virus production. Does not seem to be involved in activation of primary macrophages. Does not seem to interact specifically with neutrophils. In terms of biological role, viroporin that permeabilizes mammalian cell plasma membranes. It acts by altering permeation of ionic compounds and small molecules. This activity may lead to viral enterotoxic activity. This Epomops franqueti (Franquet's epauletted fruit bat) protein is Pre-small/secreted glycoprotein (GP).